The primary structure comprises 302 residues: Probable 2-(5''-triphosphoribosyl)-3'-dephosphocoenzyme-A synthase (302 aa).

The protein belongs to the CitG/MdcB family.

The catalysed reaction is 3'-dephospho-CoA + ATP = 2'-(5''-triphospho-alpha-D-ribosyl)-3'-dephospho-CoA + adenine. This chain is Probable 2-(5''-triphosphoribosyl)-3'-dephosphocoenzyme-A synthase, found in Albidiferax ferrireducens (strain ATCC BAA-621 / DSM 15236 / T118) (Rhodoferax ferrireducens).